Reading from the N-terminus, the 237-residue chain is Uridylate kinase (237 aa).

Residue 13–16 (KLSG) coordinates ATP. Position 53 (Gly53) interacts with UMP. ATP is bound by residues Gly54 and Arg58. Residues Asp73 and 134–141 (AGLPYFST) contribute to the UMP site. ATP is bound by residues Asn162, Tyr168, and Asp171.

This sequence belongs to the UMP kinase family. Homohexamer.

The protein localises to the cytoplasm. The catalysed reaction is UMP + ATP = UDP + ADP. It functions in the pathway pyrimidine metabolism; CTP biosynthesis via de novo pathway; UDP from UMP (UMPK route): step 1/1. Inhibited by UTP. In terms of biological role, catalyzes the reversible phosphorylation of UMP to UDP. In Leifsonia xyli subsp. xyli (strain CTCB07), this protein is Uridylate kinase.